The sequence spans 208 residues: Ribosomal RNA small subunit methyltransferase G (208 aa).

S-adenosyl-L-methionine contacts are provided by residues G78, F83, 101-103 (ERS), 129-130 (IE), and R142.

The protein belongs to the methyltransferase superfamily. RNA methyltransferase RsmG family.

It is found in the cytoplasm. Its function is as follows. Specifically methylates the N7 position of a guanine in 16S rRNA. This is Ribosomal RNA small subunit methyltransferase G from Borreliella burgdorferi (strain ATCC 35210 / DSM 4680 / CIP 102532 / B31) (Borrelia burgdorferi).